A 440-amino-acid polypeptide reads, in one-letter code: Thymidine phosphorylase (440 aa).

This sequence belongs to the thymidine/pyrimidine-nucleoside phosphorylase family. Homodimer.

The enzyme catalyses thymidine + phosphate = 2-deoxy-alpha-D-ribose 1-phosphate + thymine. It participates in pyrimidine metabolism; dTMP biosynthesis via salvage pathway; dTMP from thymine: step 1/2. In terms of biological role, the enzymes which catalyze the reversible phosphorolysis of pyrimidine nucleosides are involved in the degradation of these compounds and in their utilization as carbon and energy sources, or in the rescue of pyrimidine bases for nucleotide synthesis. This chain is Thymidine phosphorylase, found in Salmonella choleraesuis (strain SC-B67).